The sequence spans 580 residues: Cytochrome c oxidase subunit 1 (580 aa).

The disordered stretch occupies residues 1–25 (MTAVAPRVDGHVAPQRPEPTGHARK). A helical transmembrane segment spans residues 43 to 63 (IMYIIMSFSFFFLGGLMALLI). H87 lines the Fe(II)-heme a pocket. 6 consecutive transmembrane segments (helical) span residues 90–110 (VMLL…VLPL), 122–142 (LNAF…AGFL), 171–191 (MWII…INML), 214–234 (IFVT…AALG), 259–279 (LFWF…FGII), and 292–312 (FGYI…MAVW). Residues H265 and Y269 each coordinate Cu cation. A cross-link (1'-histidyl-3'-tyrosine (His-Tyr)) is located at residues 265–269 (HPEVY). The Cu cation site is built by H314 and H315. 2 helical membrane-spanning segments follow: residues 316-336 (MFVT…LISV) and 360-380 (MIWA…GIML). H398 contributes to the heme a3 binding site. Transmembrane regions (helical) follow at residues 399–419 (FHYT…YFWF), 434–454 (IHFW…HWLG), and 477–497 (ISTI…WNVF). H400 is a binding site for Fe(II)-heme a.

The protein belongs to the heme-copper respiratory oxidase family. Associates with subunits II, III and IV to form cytochrome c oxidase. The cofactor is Cu(2+). Heme is required as a cofactor.

The protein localises to the cell membrane. The enzyme catalyses 4 Fe(II)-[cytochrome c] + O2 + 8 H(+)(in) = 4 Fe(III)-[cytochrome c] + 2 H2O + 4 H(+)(out). The protein operates within energy metabolism; oxidative phosphorylation. Cytochrome c oxidase is the component of the respiratory chain that catalyzes the reduction of oxygen to water. Subunits 1-3 form the functional core of the enzyme complex. CO I is the catalytic subunit of the enzyme. Electrons originating in cytochrome c are transferred via the copper A center of subunit 2 and heme A of subunit 1 to the bimetallic center formed by heme A3 and copper B. This is Cytochrome c oxidase subunit 1 (ctaD) from Corynebacterium efficiens (strain DSM 44549 / YS-314 / AJ 12310 / JCM 11189 / NBRC 100395).